We begin with the raw amino-acid sequence, 148 residues long: Auxin-responsive protein SAUR65 (148 aa).

The protein belongs to the ARG7 family.

The protein resides in the cell membrane. In terms of biological role, may promote auxin-stimulated organ elongation, such as hypocotyls, stamen filaments and petals. The protein is Auxin-responsive protein SAUR65 of Arabidopsis thaliana (Mouse-ear cress).